A 669-amino-acid polypeptide reads, in one-letter code: MGKIKELQTSLANKIAAGEVVERPSSVVKELLENAIDAGATEISIEVEESGVQSIRVVDNGSGIEAEDLGLVFHRHATSKLDQDEDLFHIRTLGFRGEALASISSVAKVTLKTCTDNANGNEIYVENGEILNHKPAKAKKGTDILVESLFYNTPARLKYIKSLYTELGKITDIVNRMAMSHPDIRIALISDGKTMLSTNGSGRTNEVMAEIYGMKVARDLVHISGDTSDYHIEGFVAKPEHSRSNKHYISIFINGRYIKNFMLNKAILEGYHTLLTIGRFPICYINIEMDPILVDVNVHPTKLEVRLSKEEQLYQLIVSKIQEAFKDRILIPKNNLDYVPKKNKVLYSFEQQKIEFEQRQNTENNQEKTFSSEESNSKSFMAENQNDEIVIKEDSYNPFVTKTSESLITDDESSGYNNTREKDEDYFKKQQEILQEMDQTFDSNEDASVQNYENKASDDYYDVNDIKGTKSKDPKRRIPYMEIVGQVHGTYIIAQNEFGMYMIDQHAAQERIKYEYFRDKIGEVTNEVQDLLIPLTFHFSKDEQLVIDQYKNELQQVGIMLEHFGGHDYIVSSYPVWFPKDEVEEIIKDMIELILEEKKVDIKKLREDVAIMMSCKKSIKANHYLQKHEMSDLIDQLREAEDPFTCPHGRPIIINFSKYELEKLFKRVM.

The interval 357 to 379 (EQRQNTENNQEKTFSSEESNSKS) is disordered. A compositionally biased stretch (polar residues) spans 361–379 (NTENNQEKTFSSEESNSKS).

It belongs to the DNA mismatch repair MutL/HexB family.

Its function is as follows. This protein is involved in the repair of mismatches in DNA. It is required for dam-dependent methyl-directed DNA mismatch repair. May act as a 'molecular matchmaker', a protein that promotes the formation of a stable complex between two or more DNA-binding proteins in an ATP-dependent manner without itself being part of a final effector complex. The chain is DNA mismatch repair protein MutL from Staphylococcus aureus (strain Mu3 / ATCC 700698).